The sequence spans 237 residues: MEKRSELYRGKAKTVYHTDDPNRLVLEFRNDTSAFDGEKVEQLDDKGMVNNKFNHFIMSKLEEAGIPTQLDERLSDTESLVKKLDMIPVECVVRNVAAGSLVRRLGVEEGKELNPPTFEFFLKNDALHDPMVNEYHIQAFGWATAEQIEKMKELTFKVNDVLKALFADAGLLLVDYKLEFGVFDGEIMLGDEFTPDGCRLWDAETREKLDKDRFRQGLGGVVEAYREVAKRLGVTLD.

This sequence belongs to the SAICAR synthetase family.

The enzyme catalyses 5-amino-1-(5-phospho-D-ribosyl)imidazole-4-carboxylate + L-aspartate + ATP = (2S)-2-[5-amino-1-(5-phospho-beta-D-ribosyl)imidazole-4-carboxamido]succinate + ADP + phosphate + 2 H(+). The protein operates within purine metabolism; IMP biosynthesis via de novo pathway; 5-amino-1-(5-phospho-D-ribosyl)imidazole-4-carboxamide from 5-amino-1-(5-phospho-D-ribosyl)imidazole-4-carboxylate: step 1/2. This chain is Phosphoribosylaminoimidazole-succinocarboxamide synthase, found in Idiomarina loihiensis (strain ATCC BAA-735 / DSM 15497 / L2-TR).